We begin with the raw amino-acid sequence, 25 residues long: Arginine attenuator peptide (25 aa).

The protein belongs to the arginine attenuator peptide family.

Functionally, arginine attenuator peptide (AAP) that has a regulatory role in the production of arginine-specific carbamoyl phosphate synthetase. Encoded by an upstream open reading frame (uORF) within the 5'-leader region of arginine-specific carbamoyl phosphate synthetase small chain (CPA1) mRNA, it attenuates the translation of the downstream CPA1 ORF. In the presence of high concentrations of arginine, ribosomes translating the uORF encoding AAP stall at the termination codon, resulting in reduced translation from the downstream CPA1 initiation codon. This Saccharomyces cerevisiae (strain ATCC 204508 / S288c) (Baker's yeast) protein is Arginine attenuator peptide.